An 806-amino-acid polypeptide reads, in one-letter code: Mitogen-activated protein kinase 7 (806 aa).

A disordered region spans residues 1–23 (MAEPLKEEDGEDGSGEPPGRVKA). The residue at position 2 (alanine 2) is an N-acetylalanine. Residues 2 to 77 (AEPLKEEDGE…VVSSARRRLT (76 aa)) form a required for cytoplasmic targeting region. One can recognise a Protein kinase domain in the interval 55–347 (YEIIETIGNG…AAAALRHPFL (293 aa)). ATP is bound by residues 61–69 (IGNGAYGVV) and lysine 84. A required for binding to MAP2K5 region spans residues 78-139 (GQQVAIKKIP…FRSVYVVLDL (62 aa)). The necessary for oligomerization stretch occupies residues 140 to 406 (MESDLHQIIH…QQIRFQPSLQ (267 aa)). Aspartate 182 serves as the catalytic Proton acceptor. The TXY motif lies at 219-221 (TEY). A may not be required for kinase activity; required to stimulate MEF2C activity region spans residues 407-806 (PVASEPVCPD…LSDLPDLQEP (400 aa)). 2 disordered regions span residues 424-475 (APSG…SDNT) and 488-727 (RSRL…PKGS). Residues 433-443 (SPPPALPPCSG) are compositionally biased toward pro residues. 3 stretches are compositionally biased toward basic and acidic residues: residues 502-519 (PEPRKPVTAQERQREREE), 527-544 (RAKEREKRRQERERKERG), and 563-573 (DNDRSLLERWT). The short motif at 505–539 (RKPVTAQERQREREEKRRRRQERAKEREKRRQERE) is the Nuclear localization signal element. Pro residues-rich tracts occupy residues 578-592 (PPVPAPAPAPAPTPK) and 627-643 (VCPPPGPVPQPAGPVPA). The segment covering 647–660 (TAPSTSLLASQSLV) has biased composition (polar residues). The span at 678-689 (PSGPPPPDPGLT) shows a compositional bias: pro residues. Positions 693–710 (STSESPDVNLVTQQLSKS) are enriched in polar residues. The residue at position 710 (serine 710) is a Phosphoserine. A Phosphothreonine modification is found at threonine 723.

The protein belongs to the protein kinase superfamily. CMGC Ser/Thr protein kinase family. MAP kinase subfamily. Interacts with MAP2K5. Forms oligomers. Interacts with MEF2A, MEF2C and MEF2D; the interaction phosphorylates the MEF2s and enhances transcriptional activity of MEF2A, MEF2C but not MEF2D. Interacts with SGK1. Interacts with PML. Interacts (via N-terminal half) with HSP90AB1-CDC37 chaperone complex in resting cells; the interaction is MAP2K5-independent and prevents MAPK7 from ubiquitination and proteasomal degradation. Interacts with STUB1/CHIP; the interaction is enhanced in the presence of IGF1 or MAP2K5 and promotes STUB1/CHIP E3 ligase activity. The cofactor is Mg(2+). Dually phosphorylated on Thr-219 and Tyr-221, which activates the enzyme.

The protein resides in the cytoplasm. It is found in the nucleus. Its subcellular location is the PML body. It catalyses the reaction L-seryl-[protein] + ATP = O-phospho-L-seryl-[protein] + ADP + H(+). The enzyme catalyses L-threonyl-[protein] + ATP = O-phospho-L-threonyl-[protein] + ADP + H(+). Its activity is regulated as follows. Activated by tyrosine and threonine phosphorylation. Activated in response to hyperosmolarity, hydrogen peroxide, and epidermal growth factor (EGF). Its function is as follows. Plays a role in various cellular processes such as proliferation, differentiation and cell survival. The upstream activator of MAPK7 is the MAPK kinase MAP2K5. Upon activation, it translocates to the nucleus and phosphorylates various downstream targets including MEF2C. EGF activates MAPK7 through a Ras-independent and MAP2K5-dependent pathway. As part of the MAPK/ERK signaling pathway, acts as a negative regulator of apoptosis in cardiomyocytes via interaction with STUB1/CHIP and promotion of STUB1-mediated ubiquitination and degradation of ICER-type isoforms of CREM. May have a role in muscle cell differentiation. May be important for endothelial function and maintenance of blood vessel integrity. MAP2K5 and MAPK7 interact specifically with one another and not with MEK1/ERK1 or MEK2/ERK2 pathways. Phosphorylates SGK1 at Ser-78 and this is required for growth factor-induced cell cycle progression. Involved in the regulation of p53/TP53 by disrupting the PML-MDM2 interaction. This is Mitogen-activated protein kinase 7 (Mapk7) from Rattus norvegicus (Rat).